Reading from the N-terminus, the 157-residue chain is Small ribosomal subunit protein uS7 (157 aa).

It belongs to the universal ribosomal protein uS7 family. As to quaternary structure, part of the 30S ribosomal subunit. Contacts proteins S9 and S11.

One of the primary rRNA binding proteins, it binds directly to 16S rRNA where it nucleates assembly of the head domain of the 30S subunit. Is located at the subunit interface close to the decoding center, probably blocks exit of the E-site tRNA. The protein is Small ribosomal subunit protein uS7 of Pseudomonas fluorescens (strain Pf0-1).